Here is a 360-residue protein sequence, read N- to C-terminus: GTPase Obg (360 aa).

Residues 1-156 enclose the Obg domain; that stretch reads MFVDSVEIII…KCVRLELKLI (156 aa). Residues 157-360 form the OBG-type G domain; the sequence is ADIGLVGFPN…LKFVLLEALP (204 aa). GTP contacts are provided by residues 163 to 170, 188 to 192, 210 to 213, 279 to 282, and 341 to 343; these read GFPNAGKS, FTTLV, DIPG, NKCD, and SAV. Ser170 and Thr190 together coordinate Mg(2+).

Belongs to the TRAFAC class OBG-HflX-like GTPase superfamily. OBG GTPase family. As to quaternary structure, monomer. The cofactor is Mg(2+).

The protein localises to the cytoplasm. Functionally, an essential GTPase which binds GTP, GDP and possibly (p)ppGpp with moderate affinity, with high nucleotide exchange rates and a fairly low GTP hydrolysis rate. Plays a role in control of the cell cycle, stress response, ribosome biogenesis and in those bacteria that undergo differentiation, in morphogenesis control. The sequence is that of GTPase Obg from Helicobacter acinonychis (strain Sheeba).